We begin with the raw amino-acid sequence, 700 residues long: Serine/threonine-protein kinase WNK1 (700 aa).

The 258-residue stretch at 24-281 (GRYNEVLGKG…ARELLDDPFL (258 aa)) folds into the Protein kinase domain. Residues 104-107 (TELF) and K154 each bind ATP. The active-site Proton acceptor is the D171. Low complexity predominate over residues 314 to 339 (NYPSNSSSLNRQYSNGNYPSNSSSLN). 3 disordered regions span residues 314–345 (NYPSNSSSLNRQYSNGNYPSNSSSLNRQYSNG), 551–575 (ESRELSSIDSGHNHSEEEEEEEVLY), and 647–666 (ESGEEVEISPKDGFLGSVSG). A compositionally biased stretch (basic and acidic residues) spans 551–565 (ESRELSSIDSGHNHS). The span at 566-575 (EEEEEEEVLY) shows a compositional bias: acidic residues.

This sequence belongs to the protein kinase superfamily. Ser/Thr protein kinase family. WNK subfamily. In terms of processing, autophosphorylated.

The catalysed reaction is L-seryl-[protein] + ATP = O-phospho-L-seryl-[protein] + ADP + H(+). It carries out the reaction L-threonyl-[protein] + ATP = O-phospho-L-threonyl-[protein] + ADP + H(+). Functionally, regulates flowering time by modulating the photoperiod pathway. Phosphorylates APRR3. This chain is Serine/threonine-protein kinase WNK1 (WNK1), found in Arabidopsis thaliana (Mouse-ear cress).